The following is a 332-amino-acid chain: DNA-directed RNA polymerase subunit alpha (332 aa).

Positions 1–234 (MTVTANQVLR…DQLSVFGDFT (234 aa)) are alpha N-terminal domain (alpha-NTD). The alpha C-terminal domain (alpha-CTD) stretch occupies residues 248–332 (VDPVLLRPID…AGVASHGMLG (85 aa)).

The protein belongs to the RNA polymerase alpha chain family. Homodimer. The RNAP catalytic core consists of 2 alpha, 1 beta, 1 beta' and 1 omega subunit. When a sigma factor is associated with the core the holoenzyme is formed, which can initiate transcription.

It catalyses the reaction RNA(n) + a ribonucleoside 5'-triphosphate = RNA(n+1) + diphosphate. In terms of biological role, DNA-dependent RNA polymerase catalyzes the transcription of DNA into RNA using the four ribonucleoside triphosphates as substrates. In Stenotrophomonas maltophilia (strain R551-3), this protein is DNA-directed RNA polymerase subunit alpha.